The sequence spans 242 residues: Probable transcriptional regulatory protein EF_0663 (242 aa).

Over residues 1–14 (MSGHSKWSNIQGRK) the composition is skewed to polar residues. The disordered stretch occupies residues 1-22 (MSGHSKWSNIQGRKNAQDAKRG).

The protein belongs to the TACO1 family.

The protein resides in the cytoplasm. The protein is Probable transcriptional regulatory protein EF_0663 of Enterococcus faecalis (strain ATCC 700802 / V583).